We begin with the raw amino-acid sequence, 70 residues long: Large ribosomal subunit protein eL38 (70 aa).

Belongs to the eukaryotic ribosomal protein eL38 family.

The protein is Large ribosomal subunit protein eL38 (RpL38) of Aedes aegypti (Yellowfever mosquito).